The primary structure comprises 283 residues: Acetylglutamate kinase (283 aa).

Residues Gly63–Gly64, Arg85, and Asn179 contribute to the substrate site.

The protein belongs to the acetylglutamate kinase family. ArgB subfamily.

It is found in the cytoplasm. The catalysed reaction is N-acetyl-L-glutamate + ATP = N-acetyl-L-glutamyl 5-phosphate + ADP. The protein operates within amino-acid biosynthesis; L-arginine biosynthesis; N(2)-acetyl-L-ornithine from L-glutamate: step 2/4. Catalyzes the ATP-dependent phosphorylation of N-acetyl-L-glutamate. The polypeptide is Acetylglutamate kinase (Clostridium kluyveri (strain NBRC 12016)).